Consider the following 644-residue polypeptide: Keratin, type II cytoskeletal 1 (644 aa).

Residues 2–179 (SRQFSSRSGY…DPEIQKVKSR (178 aa)) form a head region. At R12 the chain carries Omega-N-methylarginine. Phosphoserine is present on residues S18 and S21. Residues 22–38 (AGIINYQRRTTSSSTRR) show a composition bias toward low complexity. Positions 22–47 (AGIINYQRRTTSSSTRRSGGGGGRFS) are disordered. An Omega-N-methylarginine modification is found at R45. At S66 the chain carries Phosphoserine. An Omega-N-methylarginine modification is found at R82. The interval 180–215 (EREQIKSLNNQFASFIDKVRFLEQQNQVLQTKWELL) is coil 1A. One can recognise an IF rod domain in the interval 180–493 (EREQIKSLNN…TLLEGEESRM (314 aa)). The interval 216-234 (QQVDTSTRTHNLEPYFESF) is linker 1. Residues 235–326 (INNLRRRVDQ…ALYQAELSQM (92 aa)) form a coil 1B region. K276 carries the N6,N6-dimethyllysine modification. Residues 327-350 (QTQISETNVILSMDNNRSLDLDSI) are linker 12. A Phosphoserine modification is found at S344. The interval 351 to 489 (IAEVKAQYED…ATYRTLLEGE (139 aa)) is coil 2. Disordered regions lie at residues 489–523 (EESRMSGECAPNVSVSVSTSHTTISGGGSRGGGGG) and 568–644 (SGGG…GVTR). The interval 490–644 (ESRMSGECAP…VSTTYSGVTR (155 aa)) is tail. Positions 501-511 (VSVSVSTSHTT) are enriched in low complexity. Gly residues-rich tracts occupy residues 513-523 (SGGGSRGGGGG) and 568-620 (SGGG…GSSS). R518 and R588 each carry omega-N-methylarginine. Positions 621–631 (GGVKSSGGSSS) are enriched in low complexity. A compositionally biased stretch (polar residues) spans 632–644 (VKFVSTTYSGVTR).

This sequence belongs to the intermediate filament family. In terms of assembly, heterotetramer of two type I and two type II keratins. Heterodimer with KRT10. Two heterodimers of KRT1 and KRT10 form a heterotetramer. Forms a heterodimer with KRT14; the interaction is more abundant in the absence of KRT5. Interacts with PLEC isoform 1C, when in a heterodimer with KRT10. Interacts with ITGB1 in the presence of RACK1 and SRC, and with RACK1. Interacts with C1QBP; the association represents a cell surface kininogen receptor. Interacts with EPPK1; interaction is dependent of higher-order structure of intermediate filament. Post-translationally, undergoes deimination of some arginine residues (citrullination). In terms of tissue distribution, the source of this protein is neonatal foreskin. The 67-kDa type II keratins are expressed in terminally differentiating epidermis.

Its subcellular location is the cell membrane. It is found in the cytoplasm. Functionally, may regulate the activity of kinases such as PKC and SRC via binding to integrin beta-1 (ITB1) and the receptor of activated protein C kinase 1 (RACK1). In complex with C1QBP is a high affinity receptor for kininogen-1/HMWK. The protein is Keratin, type II cytoskeletal 1 (KRT1) of Homo sapiens (Human).